Here is a 1040-residue protein sequence, read N- to C-terminus: ATPase family AAA domain-containing protein 2 (1040 aa).

Basic residues predominate over residues methionine 1–isoleucine 11. Residues methionine 1–arginine 30 form a disordered region. Residue serine 65 is modified to Phosphoserine. ATP is bound at residue glycine 122–threonine 129. Phosphoserine is present on residues serine 401 and serine 406. 2 coiled-coil regions span residues leucine 619 to arginine 643 and tyrosine 735 to glycine 761. In terms of domain architecture, Bromo spans glutamate 629–glutamate 741. Positions tyrosine 772–proline 799 are disordered. Residues lysine 777 and lysine 797 each participate in a glycyl lysine isopeptide (Lys-Gly) (interchain with G-Cter in SUMO2) cross-link. Residues glycine 784–lysine 797 show a composition bias toward basic and acidic residues. Phosphothreonine is present on residues threonine 801 and threonine 825. Residues leucine 811–serine 833 are compositionally biased toward basic residues. The interval leucine 811–serine 935 is disordered. Positions alanine 835–arginine 848 are enriched in polar residues. Phosphoserine occurs at positions 849, 883, and 891. 2 stretches are compositionally biased toward basic and acidic residues: residues serine 849–glutamate 863 and glutamate 874–isoleucine 885. The segment covering glutamate 901–cysteine 919 has biased composition (basic and acidic residues). Phosphoserine is present on serine 951. Threonine 972 bears the Phosphothreonine mark.

This sequence belongs to the AAA ATPase family. Interacts with ESR1 and NCOA3 and these interactions are enhanced by estradiol. Interacts with acetylated lysine residues on histone H1.4, H2A, H2B and H3 (in vitro).

Its subcellular location is the nucleus. It carries out the reaction ATP + H2O = ADP + phosphate + H(+). In terms of biological role, may be a transcriptional coactivator of the nuclear receptor ESR1 required to induce the expression of a subset of estradiol target genes, such as CCND1, MYC and E2F1. May play a role in the recruitment or occupancy of CREBBP at some ESR1 target gene promoters. May be required for histone hyperacetylation. This chain is ATPase family AAA domain-containing protein 2 (Atad2), found in Mus musculus (Mouse).